Here is a 187-residue protein sequence, read N- to C-terminus: Oligoribonuclease (187 aa).

Residues 7–170 (LCWLDMEMTG…DDILESIEEM (164 aa)) enclose the Exonuclease domain. Tyr128 is an active-site residue.

Belongs to the oligoribonuclease family.

It is found in the cytoplasm. Its function is as follows. 3'-to-5' exoribonuclease specific for small oligoribonucleotides. In Neisseria meningitidis serogroup B (strain ATCC BAA-335 / MC58), this protein is Oligoribonuclease.